Reading from the N-terminus, the 413-residue chain is Eukaryotic initiation factor 4A-9 (413 aa).

A Q motif motif is present at residues 40–68 (HSFDAMGLKENLLRGIYAYGFEKPSAIQQ). The region spanning 71-241 (IVPFCKGLDV…RKFMNKPVRI (171 aa)) is the Helicase ATP-binding domain. An ATP-binding site is contributed by 84–91 (AQSGTGKT). The short motif at 189–192 (DEAD) is the DEAD box element. In terms of domain architecture, Helicase C-terminal spans 252–413 (GIKQFYVNVD…ELPANVADLL (162 aa)).

The protein belongs to the DEAD box helicase family. eIF4A subfamily. EIF4F is a multi-subunit complex, the composition of which varies with external and internal environmental conditions. It is composed of at least EIF4A, EIF4E and EIF4G.

The enzyme catalyses ATP + H2O = ADP + phosphate + H(+). Functionally, ATP-dependent RNA helicase which is a subunit of the eIF4F complex involved in cap recognition and is required for mRNA binding to ribosome. In the current model of translation initiation, eIF4A unwinds RNA secondary structures in the 5'-UTR of mRNAs which is necessary to allow efficient binding of the small ribosomal subunit, and subsequent scanning for the initiator codon. The sequence is that of Eukaryotic initiation factor 4A-9 from Nicotiana tabacum (Common tobacco).